Here is a 357-residue protein sequence, read N- to C-terminus: D-alanine--D-alanine ligase (357 aa).

In terms of domain architecture, ATP-grasp spans 134–339 (KQLFEHRGLP…YPDLIAKLID (206 aa)). Position 167-222 (167-222 (NDKLTYPVFVKPANLGSSVGISKCNNEEELKSGIAEAFQFDRKLVIEQGINAREIE)) interacts with ATP. Residues Asp293, Glu306, and Asn308 each contribute to the Mg(2+) site.

The protein belongs to the D-alanine--D-alanine ligase family. It depends on Mg(2+) as a cofactor. Mn(2+) is required as a cofactor.

Its subcellular location is the cytoplasm. The enzyme catalyses 2 D-alanine + ATP = D-alanyl-D-alanine + ADP + phosphate + H(+). The protein operates within cell wall biogenesis; peptidoglycan biosynthesis. Functionally, cell wall formation. This chain is D-alanine--D-alanine ligase, found in Staphylococcus epidermidis (strain ATCC 35984 / DSM 28319 / BCRC 17069 / CCUG 31568 / BM 3577 / RP62A).